The sequence spans 212 residues: Large ribosomal subunit protein uL4 (212 aa).

Over residues 54–65 the composition is skewed to polar residues; it reads SQKSRSDVSGSN. Positions 54–85 are disordered; sequence SQKSRSDVSGSNKKPWRQKGTGRARSGSVKSP.

It belongs to the universal ribosomal protein uL4 family. Part of the 50S ribosomal subunit.

In terms of biological role, one of the primary rRNA binding proteins, this protein initially binds near the 5'-end of the 23S rRNA. It is important during the early stages of 50S assembly. It makes multiple contacts with different domains of the 23S rRNA in the assembled 50S subunit and ribosome. Forms part of the polypeptide exit tunnel. This chain is Large ribosomal subunit protein uL4, found in Blochmanniella floridana.